The following is a 638-amino-acid chain: 1-deoxy-D-xylulose-5-phosphate synthase (638 aa).

Residues H78 and A119–S121 each bind thiamine diphosphate. D150 serves as a coordination point for Mg(2+). Residues G151–S152, N179, Y288, and E370 each bind thiamine diphosphate. N179 provides a ligand contact to Mg(2+).

Belongs to the transketolase family. DXPS subfamily. As to quaternary structure, homodimer. Mg(2+) is required as a cofactor. The cofactor is thiamine diphosphate.

The enzyme catalyses D-glyceraldehyde 3-phosphate + pyruvate + H(+) = 1-deoxy-D-xylulose 5-phosphate + CO2. It participates in metabolic intermediate biosynthesis; 1-deoxy-D-xylulose 5-phosphate biosynthesis; 1-deoxy-D-xylulose 5-phosphate from D-glyceraldehyde 3-phosphate and pyruvate: step 1/1. Catalyzes the acyloin condensation reaction between C atoms 2 and 3 of pyruvate and glyceraldehyde 3-phosphate to yield 1-deoxy-D-xylulose-5-phosphate (DXP). The polypeptide is 1-deoxy-D-xylulose-5-phosphate synthase (Brucella anthropi (strain ATCC 49188 / DSM 6882 / CCUG 24695 / JCM 21032 / LMG 3331 / NBRC 15819 / NCTC 12168 / Alc 37) (Ochrobactrum anthropi)).